A 793-amino-acid chain; its full sequence is Nuclear cap-binding protein subunit 1 (793 aa).

Disordered regions lie at residues 1–30 (MSRR…SEIE) and 668–692 (LARQ…GPLE). Residues 30 to 242 (EERLESLICR…CLWSQIQKLK (213 aa)) form the MIF4G domain. Residues 683-692 (SSDREDGPLE) show a composition bias toward basic and acidic residues. Positions 686-716 (REDGPLEEQIERLQEKVESAQSEQKNLFLVI) form a coiled coil.

Belongs to the NCBP1 family. Component of the nuclear cap-binding complex (CBC), a heterodimer composed of NCBP1/CBP80 and NCBP2/CBP20 that interacts with m7GpppG-capped RNA. Component of an alternative nuclear cap-binding complex (CBC) composed of NCBP1/CBP80 and NCBP3.

It is found in the nucleus. The protein localises to the cytoplasm. Its function is as follows. Component of the cap-binding complex (CBC), which binds cotranscriptionally to the 5'-cap of pre-mRNAs and is involved in various processes such as pre-mRNA splicing, translation regulation, nonsense-mediated mRNA decay, RNA-mediated gene silencing (RNAi) by microRNAs (miRNAs) and mRNA export. The CBC complex is involved in mRNA export from the nucleus, leading to the recruitment of the mRNA export machinery to the 5'-end of mRNA and to mRNA export in a 5' to 3' direction through the nuclear pore. The CBC complex is also involved in mediating U snRNA and intronless mRNAs export from the nucleus. The CBC complex is essential for a pioneer round of mRNA translation, before steady state translation when the CBC complex is replaced by cytoplasmic cap-binding protein eIF4E. The pioneer round of mRNA translation mediated by the CBC complex plays a central role in nonsense-mediated mRNA decay (NMD), NMD only taking place in mRNAs bound to the CBC complex, but not on eIF4E-bound mRNAs. The CBC complex enhances NMD in mRNAs containing at least one exon-junction complex (EJC), promoting the interaction between UPF1 and UPF2. The CBC complex is also involved in 'failsafe' NMD, which is independent of the EJC complex, while it does not participate in Staufen-mediated mRNA decay (SMD). During cell proliferation, the CBC complex is also involved in microRNAs (miRNAs) biogenesis via its interaction with SRRT/ARS2 and is required for miRNA-mediated RNA interference. The CBC complex also acts as a negative regulator of PARN, thereby acting as an inhibitor of mRNA deadenylation. In the CBC complex, NCBP1/CBP80 does not bind directly capped RNAs (m7GpppG-capped RNA) but is required to stabilize the movement of the N-terminal loop of NCBP2/CBP20 and lock the CBC into a high affinity cap-binding state with the cap structure. Associates with NCBP3 to form an alternative cap-binding complex (CBC) which plays a key role in mRNA export. The conventional CBC with NCBP2 binds both small nuclear RNA (snRNA) and messenger (mRNA) and is involved in their export from the nucleus whereas the alternative CBC with NCBP3 does not bind snRNA and associates only with mRNA thereby playing a role only in mRNA export. In Gallus gallus (Chicken), this protein is Nuclear cap-binding protein subunit 1 (NCBP1).